The primary structure comprises 302 residues: Nucleotide-binding protein RHOS4_02640 (302 aa).

15 to 22 (GPSGAGRT) contributes to the ATP binding site. 62–65 (DVRN) is a binding site for GTP.

It belongs to the RapZ-like family.

In terms of biological role, displays ATPase and GTPase activities. The polypeptide is Nucleotide-binding protein RHOS4_02640 (Cereibacter sphaeroides (strain ATCC 17023 / DSM 158 / JCM 6121 / CCUG 31486 / LMG 2827 / NBRC 12203 / NCIMB 8253 / ATH 2.4.1.) (Rhodobacter sphaeroides)).